The sequence spans 97 residues: Small ribosomal subunit protein bS20c (97 aa).

Positions 1-15 are enriched in polar residues; sequence MSKNVSAIKKNQVSL. The interval 1-20 is disordered; sequence MSKNVSAIKKNQVSLRNKRK.

This sequence belongs to the bacterial ribosomal protein bS20 family.

The protein resides in the plastid. It localises to the chloroplast. Binds directly to 16S ribosomal RNA. The polypeptide is Small ribosomal subunit protein bS20c (Gracilaria tenuistipitata var. liui (Red alga)).